Here is a 609-residue protein sequence, read N- to C-terminus: Glutamine--fructose-6-phosphate aminotransferase [isomerizing] (609 aa).

Cys-2 functions as the Nucleophile; for GATase activity in the catalytic mechanism. The region spanning 2–217 (CGIVGAIAGR…EGDTAELRRD (216 aa)) is the Glutamine amidotransferase type-2 domain. 2 consecutive SIS domains span residues 284–425 (TADA…LQGR) and 458–599 (WAER…VDKP). Lys-604 acts as the For Fru-6P isomerization activity in catalysis.

Homodimer.

It localises to the cytoplasm. The catalysed reaction is D-fructose 6-phosphate + L-glutamine = D-glucosamine 6-phosphate + L-glutamate. Catalyzes the first step in hexosamine metabolism, converting fructose-6P into glucosamine-6P using glutamine as a nitrogen source. The protein is Glutamine--fructose-6-phosphate aminotransferase [isomerizing] of Xanthomonas campestris pv. campestris (strain ATCC 33913 / DSM 3586 / NCPPB 528 / LMG 568 / P 25).